The sequence spans 278 residues: Tyrosine-protein phosphatase pmp1 (278 aa).

Residues 60–214 form the Tyrosine-protein phosphatase domain; the sequence is GPVCIYPPNI…LSEYQQIIRK (155 aa). C158 functions as the Phosphocysteine intermediate in the catalytic mechanism. Residues 217-278 are disordered; that stretch reads SQGPYQSSSL…SSGSISNDAS (62 aa). The segment covering 252–278 has biased composition (polar residues); it reads SPSTSESSMFTNLRRTRSSGSISNDAS.

Belongs to the protein-tyrosine phosphatase family. Non-receptor class dual specificity subfamily.

It catalyses the reaction O-phospho-L-tyrosyl-[protein] + H2O = L-tyrosyl-[protein] + phosphate. Functionally, dual specificity phosphatase that dephosphorylates MAP kinase pmk1 on a Tyr. Has a role in chloride ion homeostasis by inactivating this pmk1 MAP kinase pathway. The protein is Tyrosine-protein phosphatase pmp1 (pmp1) of Schizosaccharomyces pombe (strain 972 / ATCC 24843) (Fission yeast).